A 35-amino-acid chain; its full sequence is Tau-theraphotoxin-Pc1b (35 aa).

Disulfide bonds link Cys3-Cys17, Cys10-Cys22, and Cys16-Cys29. Position 35 is a phenylalanine amide (Phe35).

This sequence belongs to the neurotoxin 10 (Hwtx-1) family. 62 (Vatx) subfamily. As to expression, expressed by the venom gland.

It is found in the secreted. Selectively activates the mammalian capsaicin receptor TRPV1, a non-selective cation channel expressed by sensory neurons of the pain pathway. Is more potent than VaTx1, but less potent than VaTx3. Interacts with distinct regions of the channel than capsaicin, since it only acts on the extracellular face of the channel, and capsaicin binds to the cytosolic side. Also activates avian TRPV1, which is insensitive to capsaicin. Produce weak inhibition on potassium channels Kv2.1/KCNB1. This chain is Tau-theraphotoxin-Pc1b, found in Psalmopoeus cambridgei (Trinidad chevron tarantula).